The following is a 92-amino-acid chain: Small ribosomal subunit protein uS19 (92 aa).

This sequence belongs to the universal ribosomal protein uS19 family.

Functionally, protein S19 forms a complex with S13 that binds strongly to the 16S ribosomal RNA. The polypeptide is Small ribosomal subunit protein uS19 (Ruegeria pomeroyi (strain ATCC 700808 / DSM 15171 / DSS-3) (Silicibacter pomeroyi)).